The following is a 29-amino-acid chain: Cytochrome b6-f complex subunit 8 (29 aa).

Residues 3 to 23 traverse the membrane as a helical segment; it reads IVSIAWAALMVVFTFSLSLVV.

It belongs to the PetN family. The 4 large subunits of the cytochrome b6-f complex are cytochrome b6, subunit IV (17 kDa polypeptide, PetD), cytochrome f and the Rieske protein, while the 4 small subunits are PetG, PetL, PetM and PetN. The complex functions as a dimer.

It is found in the plastid. The protein localises to the chloroplast thylakoid membrane. Component of the cytochrome b6-f complex, which mediates electron transfer between photosystem II (PSII) and photosystem I (PSI), cyclic electron flow around PSI, and state transitions. The sequence is that of Cytochrome b6-f complex subunit 8 from Angiopteris evecta (Mule's foot fern).